Reading from the N-terminus, the 309-residue chain is Mitochondrial succinate-fumarate transporter 1 (309 aa).

3 Solcar repeats span residues 11–96, 108–196, and 208–298; these read IPPY…FQTA, RGRF…FDIL, and LQPW…VTGL. The next 6 membrane-spanning stretches (helical) occupy residues 17 to 37, 65 to 85, 111 to 131, 171 to 191, 214 to 234, and 273 to 293; these read AVSG…IDVI, VRAL…KYTL, FLSG…PFEV, GAAP…TAKN, MISG…FDVV, and GLLP…AVAD.

Belongs to the mitochondrial carrier (TC 2.A.29) family. In terms of tissue distribution, expressed in root tips, cotyledons, hypocotyls, leaves, trichomes, stems, flowers, carpels, anthers, pollen and abscission zone of siliques.

It is found in the mitochondrion inner membrane. Its function is as follows. May transport cytoplasmic succinate, derived from fatty acid oxidation, into the mitochondrial matrix in exchange of fumarate during lipid mobilization in seed germination. Conversion of seed-reserved triacylglycerols into sucrose is necessary for growth before the onset of photosynthesis and involves fatty acid beta-oxidation, the glyoxylate cycle and gluconeogenesis. The polypeptide is Mitochondrial succinate-fumarate transporter 1 (SFC1) (Arabidopsis thaliana (Mouse-ear cress)).